We begin with the raw amino-acid sequence, 264 residues long: Ribosomal RNA small subunit methyltransferase J (264 aa).

Residues 111–112 (RD), 127–128 (ER), and Asp180 each bind S-adenosyl-L-methionine.

The protein belongs to the methyltransferase superfamily. RsmJ family.

Its subcellular location is the cytoplasm. It catalyses the reaction guanosine(1516) in 16S rRNA + S-adenosyl-L-methionine = N(2)-methylguanosine(1516) in 16S rRNA + S-adenosyl-L-homocysteine + H(+). Specifically methylates the guanosine in position 1516 of 16S rRNA. The sequence is that of Ribosomal RNA small subunit methyltransferase J from Alkalilimnicola ehrlichii (strain ATCC BAA-1101 / DSM 17681 / MLHE-1).